Here is a 462-residue protein sequence, read N- to C-terminus: Indoleacetamide hydrolase (462 aa).

Residues K74 and S149 each act as charge relay system in the active site. Catalysis depends on S173, which acts as the Acyl-ester intermediate.

It belongs to the amidase family.

The protein operates within plant hormone metabolism; auxin biosynthesis. In terms of biological role, hydrolyzes indole-3-acetamide (IAM) into indole-3-acetic acid (IAA). The polypeptide is Indoleacetamide hydrolase (iaaH) (Allorhizobium ampelinum (strain ATCC BAA-846 / DSM 112012 / S4) (Agrobacterium vitis (strain S4))).